The primary structure comprises 515 residues: Carboxyl-terminal-processing peptidase 2, chloroplastic (515 aa).

The PDZ domain occupies 198-286 (FKSLRSGTQG…SAVELAIRSG (89 aa)). Residues Ser417 and Lys442 each act as charge relay system in the active site.

This sequence belongs to the peptidase S41A family.

The protein localises to the plastid. It localises to the chloroplast thylakoid lumen. The enzyme catalyses The enzyme shows specific recognition of a C-terminal tripeptide, Xaa-Yaa-Zaa, in which Xaa is preferably Ala or Leu, Yaa is preferably Ala or Tyr, and Zaa is preferably Ala, but then cleaves at a variable distance from the C-terminus. A typical cleavage is -Ala-Ala-|-Arg-Ala-Ala-Lys-Glu-Asn-Tyr-Ala-Leu-Ala-Ala.. Protease involved in the C-terminal processing of the chloroplastic D1 protein of photosystem II. This proteolytic processing is necessary to allow the light-driven assembly of the tetranuclear manganese cluster, which is responsible for photosynthetic water oxidation. In Arabidopsis thaliana (Mouse-ear cress), this protein is Carboxyl-terminal-processing peptidase 2, chloroplastic (CTPA2).